We begin with the raw amino-acid sequence, 26 residues long: TICYNHLTIRSEVTEICIICDDDYYF.

This sequence belongs to the three-finger toxin family. Short-chain subfamily. Orphan group VIII (haditoxin) sub-subfamily. In terms of assembly, homodimer; non-covalently linked. As to expression, expressed by the venom gland.

It is found in the secreted. In terms of biological role, antagonist of muscle and neuronal nicotinic acetylcholine receptors (nAChR) with highest affinity for neuronal alpha-7/CHRNA7 nAChRs. The sequence is that of Muscarinic toxin-like protein 1 from Naja naja (Indian cobra).